We begin with the raw amino-acid sequence, 815 residues long: Dual specificity tyrosine-phosphorylation-regulated kinase mbk-2 (815 aa).

Disordered stretches follow at residues 1–49 (MAAL…NYTR), 67–146 (PSSF…PLGT), 185–204 (YEFP…SQQH), and 298–395 (ALPS…FRPE). Polar residues-rich tracts occupy residues 7 to 25 (FTRN…TQQG) and 40 to 49 (SKMSNINYTR). Residues 68–78 (SSFSGASSSSS) are compositionally biased toward low complexity. 2 stretches are compositionally biased toward polar residues: residues 119 to 140 (SGNT…TSNL) and 190 to 204 (GQAQ…SQQH). Low complexity predominate over residues 301–316 (SVGTSSSNGSSNSSSG). Positions 325–351 (LMTQSIGGPNKHLSASHSTLNTASTHD) are enriched in polar residues. S361 carries the phosphoserine; by cdk-1 modification. The segment covering 363-391 (SNESLSRSHTSSSGGSQGGHNSNSGSNSG) has biased composition (low complexity). Residues 460-773 (YEVLKVIGKG…PAQALKHKWL (314 aa)) enclose the Protein kinase domain. ATP-binding positions include 466-474 (IGKGSFGQV) and K489. The Proton acceptor role is filled by D586. Position 620 is a phosphotyrosine; by autocatalysis (Y620).

The protein belongs to the protein kinase superfamily. CMGC Ser/Thr protein kinase family. MNB/DYRK subfamily. As to quaternary structure, part of a complex, consisting of pseudophosphatases egg-3, egg-4, egg-5 and kinase mbk-2. Interacts (via Tyr-618 and Tyr-620) with egg-4 (via tyrosine-protein phosphatase domain) and egg-5 (via tyrosine-protein phosphatase domain); mbk-2 tyrosine phosphorylation enhances the interaction. The interaction inhibits mbk-2 kinase activity and is required for mbk-2 oocyte cortex localization. Interacts (via N-terminus) with egg-3 (via tyrosine-protein phosphatase domain); the interaction does not affect mbk-2 kinase activity, is enhanced by mbk-2 tyrosine phosphorylation status and requires prior binding of mbk-2 to egg-4 and egg-5. The cofactor is Mg(2+). Autophosphorylated.

Its subcellular location is the cytoplasm. It is found in the cell cortex. The enzyme catalyses L-seryl-[protein] + ATP = O-phospho-L-seryl-[protein] + ADP + H(+). The catalysed reaction is L-threonyl-[protein] + ATP = O-phospho-L-threonyl-[protein] + ADP + H(+). It catalyses the reaction L-tyrosyl-[protein] + ATP = O-phospho-L-tyrosyl-[protein] + ADP + H(+). Its activity is regulated as follows. Activated during oocyte maturation by phosphorylation on Ser-361 by cdk-1. The pseudotyrosine phosphatases egg-4 and egg-5 sequester activated mbk-2 until the meiotic divisions and inhibit mbk-2 kinase activity directly, using a mixed-inhibition mechanism that does not involve tyrosine dephosphorylation. Its function is as follows. Required for oocyte-to-zygote transition in which it phosphorylates oocyte proteins, including mei-1, oma-1, oma-2, mex-5, and mex-6, modifying their activity and/or stability following meiosis. Through phosphorylation of P granule components including meg-1, promotes the disassembly of zygotic P granules in the anterior cytoplasm during zygote polarization, and thus plays a role in P granule distribution and segregation in early stage embryos following meiosis. Functions in both spindle positioning and in the posterior localization of cytoplasmic determinants, including pie-1, pos-1, and pgl-1, in early embryos. Involved in the asymmetric distribution of plk-1 at the 2-cell embryonic stage. The chain is Dual specificity tyrosine-phosphorylation-regulated kinase mbk-2 from Caenorhabditis briggsae.